Consider the following 1382-residue polypeptide: Insulin receptor (1382 aa).

A signal peptide spans 1 to 27; it reads MATGGRRGAAAAPLLVAVAALLLGAAG. Extracellular-side segments run 28 to 758 and 763 to 956; these read HLYP…PRPS and SLGD…NIAK. An intrachain disulfide couples C35 to C53. 4 N-linked (GlcNAc...) asparagine glycosylation sites follow: N43, N52, N105, and N138. Disulfide bonds link C153–C182, C186–C209, C196–C215, C219–C228, C223–C234, C235–C243, C239–C252, C255–C264, and C268–C280. Residue N242 is glycosylated (N-linked (GlcNAc...) asparagine). N-linked (GlcNAc...) asparagine glycosylation is present at N282. Disulfide bonds link C286/C311, C293/C301, C315/C328, C331/C335, and C339/C360. N322 carries N-linked (GlcNAc...) asparagine glycosylation. N364 carries an N-linked (GlcNAc...) asparagine glycan. Residue S400 is modified to Phosphoserine. At Y401 the chain carries Phosphotyrosine. S407 carries the post-translational modification Phosphoserine. N-linked (GlcNAc...) asparagine glycosylation is found at N424 and N445. Residues C462 and C495 are joined by a disulfide bond. N541, N633, N651, and N698 each carry an N-linked (GlcNAc...) asparagine glycan. In terms of domain architecture, Fibronectin type-III 1 spans 624 to 726; that stretch reads VPLDPISVSN…SQILKELEES (103 aa). 2 disulfide bridges follow: C674–C899 and C825–C834. Positions 686-708 are disordered; the sequence is SPPFESEDSQKHNQSEYEDSAGE. Residues 733-741 are insulin-binding; the sequence is EDYLHNVVF. The tract at residues 746 to 766 is disordered; sequence TSSGTGAEDPRPSRKRRSLGD. Fibronectin type-III domains lie at 757–842 and 853–947; these read PSRK…YVSA and IVGP…VTDY. N769 and N782 each carry an N-linked (GlcNAc...) asparagine glycan. Residues N920 and N933 are each glycosylated (N-linked (GlcNAc...) asparagine). Residues 957-979 form a helical membrane-spanning segment; sequence IIIGPLIFVFLFSVVIGSIYLFL. At 980–1382 the chain is on the cytoplasmic side; it reads RKRQPDGPLG…ILTLPRSNPS (403 aa). Phosphotyrosine; by autocatalysis is present on residues Y992, Y999, and Y1011. Position 999 (Y999) is a region of interest, important for interaction with IRS1, SHC1 and STAT5B. A Protein kinase domain is found at 1023–1298; that stretch reads ITLLRELGQG…LLKDDLHPSF (276 aa). ATP contacts are provided by S1033 and K1057. K1079 is covalently cross-linked (Glycyl lysine isopeptide (Lys-Gly) (interchain with G-Cter in ubiquitin)). Position 1083 is an S-nitrosocysteine (C1083). ATP is bound at residue 1104-1110; that stretch reads ELMAHGD. D1159 acts as the Proton donor/acceptor in catalysis. ATP contacts are provided by residues 1163–1164 and D1177; that span reads RN. 5 positions are modified to phosphotyrosine; by autocatalysis: Y1185, Y1189, Y1190, Y1355, and Y1361. Positions 1360 to 1382 are disordered; sequence PYTHMNGGKKNGRILTLPRSNPS. Positions 1361 to 1364 are PIK3R1-binding; it reads YTHM.

The protein belongs to the protein kinase superfamily. Tyr protein kinase family. Insulin receptor subfamily. As to quaternary structure, tetramer of 2 alpha and 2 beta chains linked by disulfide bonds. The alpha chains carry the insulin-binding regions, while the beta chains carry the kinase domain. Forms a hybrid receptor with IGF1R, the hybrid is a tetramer consisting of 1 alpha chain and 1 beta chain of INSR and 1 alpha chain and 1 beta chain of IGF1R. Interacts with SORBS1 but dissociates from it following insulin stimulation. Binds SH2B2. Activated form of INSR interacts (via Tyr-999) with the PTB/PID domains of IRS1 and SHC1. The sequences surrounding the phosphorylated NPXY motif contribute differentially to either IRS1 or SHC1 recognition. Interacts (via tyrosines in the C-terminus) with IRS2 (via PTB domain and 591-786 AA); the 591-786 would be the primary anchor of IRS2 to INSR while the PTB domain would have a stabilizing action on the interaction with INSR. Interacts with the SH2 domains of the 85 kDa regulatory subunit of PI3K (PIK3R1) in vitro, when autophosphorylated on tyrosine residues. Interacts with SOCS7. Interacts (via the phosphorylated Tyr-999), with SOCS3. Interacts (via the phosphorylated Tyr-1185, Tyr-1189, Tyr-1190) with SOCS1. Interacts with CAV2 (tyrosine-phosphorylated form); the interaction is increased with 'Tyr-27'phosphorylation of CAV2. Interacts with ARRB2. Interacts with GRB10; this interaction blocks the association between IRS1/IRS2 and INSR, significantly reduces insulin-stimulated tyrosine phosphorylation of IRS1 and IRS2 and thus decreases insulin signaling. Interacts with GRB7. Interacts with PDPK1. Interacts (via Tyr-1190) with GRB14 (via BPS domain); this interaction protects the tyrosines in the activation loop from dephosphorylation, but promotes dephosphorylation of Tyr-999, this results in decreased interaction with, and phosphorylation of, IRS1. Interacts (via subunit alpha) with ENPP1 (via 485-599 AA); this interaction blocks autophosphorylation. Interacts with PTPRE; this interaction is dependent of Tyr-1185, Tyr-1189 and Tyr-1190 of the INSR. Interacts with STAT5B (via SH2 domain). Interacts with PTPRF. Interacts with ATIC; ATIC together with PRKAA2/AMPK2 and HACD3/PTPLAD1 is proposed to be part of a signaling netwok regulating INSR autophosphorylation and endocytosis. Interacts with the cone snail venom insulin Con-Ins G1. Interacts with the insulin receptor SORL1; this interaction strongly increases its surface exposure, hence strengthens insulin signal reception. Interacts (tyrosine phosphorylated) with CCDC88A/GIV (via SH2-like region); binding requires autophosphorylation of the INSR C-terminal region. Interacts with GNAI3; the interaction is probably mediated by CCDC88A/GIV. Interacts with LMBRD1. Interacts (in response to insulin stimulation) with NCK1; this interaction may recruit PTPN1 to mediate INSR dephosphorylation. Interacts with CD248; this interaction diminishes INSR autophosphorylation. After being transported from the endoplasmic reticulum to the Golgi apparatus, the single glycosylated precursor is further glycosylated and then cleaved, followed by its transport to the plasma membrane. In terms of processing, autophosphorylated on tyrosine residues in response to insulin. Phosphorylation of Tyr-999 is required for binding to IRS1, SHC1 and STAT5B. Dephosphorylated by PTPRE at Tyr-999, Tyr-1185, Tyr-1189 and Tyr-1190. May also be phosphorylated at Tyr-1185 and Tyr-1190 by mTORC2. Dephosphorylated by PTPRF and PTPN1. Dephosphorylated by PTPN2; down-regulates insulin-induced signaling. Dephosphorylation at Tyr-1189 and Tyr-1190 requires the SH2/SH3 adapter protein NCK1, probably to recruit its interaction partner PTPN1. Post-translationally, S-nitrosylation at Cys-1083 by BLVRB inhibits the receptor tyrosine kinase, thereby inhibiting insulin signaling. Ubiquitinated by MARCHF1; leading to degradation thereby reducing surface INSR expression. Isoform Long and isoform Short are predominantly expressed in tissue targets of insulin metabolic effects: liver, adipose tissue and skeletal muscle but are also expressed in the peripheral nerve, kidney, pulmonary alveoli, pancreatic acini, placenta vascular endothelium, fibroblasts, monocytes, granulocytes, erythrocytes and skin. Isoform Short is preferentially expressed in fetal cells such as fetal fibroblasts, muscle, liver and kidney. Found as a hybrid receptor with IGF1R in muscle, heart, kidney, adipose tissue, skeletal muscle, hepatoma, fibroblasts, spleen and placenta (at protein level). Overexpressed in several tumors, including breast, colon, lung, ovary, and thyroid carcinomas.

It localises to the cell membrane. Its subcellular location is the late endosome. It is found in the lysosome. It carries out the reaction L-tyrosyl-[protein] + ATP = O-phospho-L-tyrosyl-[protein] + ADP + H(+). Activated in response to insulin. Autophosphorylation activates the kinase activity. PTPN1, PTPRE and PTPRF dephosphorylate important tyrosine residues, thereby reducing INSR activity. Inhibited by ENPP1. GRB10 and GRB14 inhibit the catalytic activity of the INSR, they block access of substrates to the activated receptor. SOCS1 and SOCS3 act as negative regulators of INSR activity, they bind to the activated INRS and interfere with the phosphorylation of INSR substrates. Receptor tyrosine kinase which mediates the pleiotropic actions of insulin. Binding of insulin leads to phosphorylation of several intracellular substrates, including, insulin receptor substrates (IRS1, 2, 3, 4), SHC, GAB1, CBL and other signaling intermediates. Each of these phosphorylated proteins serve as docking proteins for other signaling proteins that contain Src-homology-2 domains (SH2 domain) that specifically recognize different phosphotyrosine residues, including the p85 regulatory subunit of PI3K and SHP2. Phosphorylation of IRSs proteins lead to the activation of two main signaling pathways: the PI3K-AKT/PKB pathway, which is responsible for most of the metabolic actions of insulin, and the Ras-MAPK pathway, which regulates expression of some genes and cooperates with the PI3K pathway to control cell growth and differentiation. Binding of the SH2 domains of PI3K to phosphotyrosines on IRS1 leads to the activation of PI3K and the generation of phosphatidylinositol-(3, 4, 5)-triphosphate (PIP3), a lipid second messenger, which activates several PIP3-dependent serine/threonine kinases, such as PDPK1 and subsequently AKT/PKB. The net effect of this pathway is to produce a translocation of the glucose transporter SLC2A4/GLUT4 from cytoplasmic vesicles to the cell membrane to facilitate glucose transport. Moreover, upon insulin stimulation, activated AKT/PKB is responsible for: anti-apoptotic effect of insulin by inducing phosphorylation of BAD; regulates the expression of gluconeogenic and lipogenic enzymes by controlling the activity of the winged helix or forkhead (FOX) class of transcription factors. Another pathway regulated by PI3K-AKT/PKB activation is mTORC1 signaling pathway which regulates cell growth and metabolism and integrates signals from insulin. AKT mediates insulin-stimulated protein synthesis by phosphorylating TSC2 thereby activating mTORC1 pathway. The Ras/RAF/MAP2K/MAPK pathway is mainly involved in mediating cell growth, survival and cellular differentiation of insulin. Phosphorylated IRS1 recruits GRB2/SOS complex, which triggers the activation of the Ras/RAF/MAP2K/MAPK pathway. In addition to binding insulin, the insulin receptor can bind insulin-like growth factors (IGFI and IGFII). Isoform Short has a higher affinity for IGFII binding. When present in a hybrid receptor with IGF1R, binds IGF1. PubMed:12138094 shows that hybrid receptors composed of IGF1R and INSR isoform Long are activated with a high affinity by IGF1, with low affinity by IGF2 and not significantly activated by insulin, and that hybrid receptors composed of IGF1R and INSR isoform Short are activated by IGF1, IGF2 and insulin. In contrast, PubMed:16831875 shows that hybrid receptors composed of IGF1R and INSR isoform Long and hybrid receptors composed of IGF1R and INSR isoform Short have similar binding characteristics, both bind IGF1 and have a low affinity for insulin. In adipocytes, inhibits lipolysis. The protein is Insulin receptor (INSR) of Homo sapiens (Human).